Reading from the N-terminus, the 430-residue chain is C4-dicarboxylate transport protein (430 aa).

9 consecutive transmembrane segments (helical) span residues 8 to 28, 44 to 64, 76 to 96, 144 to 164, 184 to 204, 222 to 242, 289 to 309, 326 to 346, and 352 to 372; these read SLYF…HFYP, LIKM…IAGM, AALL…LVVV, AFAS…GFAL, VIFG…FGAM, LILC…GSIA, VVGL…SIYL, IWHQ…AAGV, and IVLA…LALI.

It belongs to the dicarboxylate/amino acid:cation symporter (DAACS) (TC 2.A.23) family.

It localises to the cell inner membrane. Functionally, responsible for the transport of dicarboxylates such as succinate, fumarate, and malate from the periplasm across the membrane. The chain is C4-dicarboxylate transport protein from Pectobacterium atrosepticum (strain SCRI 1043 / ATCC BAA-672) (Erwinia carotovora subsp. atroseptica).